Here is a 491-residue protein sequence, read N- to C-terminus: uncharacterized protein (491 aa).

An ATP-binding site is contributed by 266 to 273 (GIQGTGKS).

It belongs to the AAA ATPase family. Highly divergent.

Its subcellular location is the plastid. The protein localises to the chloroplast. This is an uncharacterized protein from Porphyra purpurea (Red seaweed).